The sequence spans 692 residues: Elongation factor G (692 aa).

Residues 8-283 (NRIRNIGIAA…AVIDYLPAPT (276 aa)) form the tr-type G domain. Residues 17 to 24 (AHIDAGKT), 81 to 85 (DTPGH), and 135 to 138 (NKMD) contribute to the GTP site.

It belongs to the TRAFAC class translation factor GTPase superfamily. Classic translation factor GTPase family. EF-G/EF-2 subfamily.

It is found in the cytoplasm. Catalyzes the GTP-dependent ribosomal translocation step during translation elongation. During this step, the ribosome changes from the pre-translocational (PRE) to the post-translocational (POST) state as the newly formed A-site-bound peptidyl-tRNA and P-site-bound deacylated tRNA move to the P and E sites, respectively. Catalyzes the coordinated movement of the two tRNA molecules, the mRNA and conformational changes in the ribosome. In Helicobacter pylori (strain P12), this protein is Elongation factor G.